The chain runs to 341 residues: Ketol-acid reductoisomerase (NADP(+)) (341 aa).

The KARI N-terminal Rossmann domain maps to 2-181; the sequence is AKVYYNGDAN…GATRAGVLET (180 aa). NADP(+) is bound by residues 25–28, R48, S52, and 82–85; these read YGSQ and DEKQ. H107 is an active-site residue. Residue G133 participates in NADP(+) binding. A KARI C-terminal knotted domain is found at 182–327; sequence TFKEETETDL…RELRSMMPFV (146 aa). Positions 190, 194, 226, and 230 each coordinate Mg(2+). S251 serves as a coordination point for substrate.

The protein belongs to the ketol-acid reductoisomerase family. It depends on Mg(2+) as a cofactor.

It carries out the reaction (2R)-2,3-dihydroxy-3-methylbutanoate + NADP(+) = (2S)-2-acetolactate + NADPH + H(+). The enzyme catalyses (2R,3R)-2,3-dihydroxy-3-methylpentanoate + NADP(+) = (S)-2-ethyl-2-hydroxy-3-oxobutanoate + NADPH + H(+). It functions in the pathway amino-acid biosynthesis; L-isoleucine biosynthesis; L-isoleucine from 2-oxobutanoate: step 2/4. The protein operates within amino-acid biosynthesis; L-valine biosynthesis; L-valine from pyruvate: step 2/4. Its function is as follows. Involved in the biosynthesis of branched-chain amino acids (BCAA). Catalyzes an alkyl-migration followed by a ketol-acid reduction of (S)-2-acetolactate (S2AL) to yield (R)-2,3-dihydroxy-isovalerate. In the isomerase reaction, S2AL is rearranged via a Mg-dependent methyl migration to produce 3-hydroxy-3-methyl-2-ketobutyrate (HMKB). In the reductase reaction, this 2-ketoacid undergoes a metal-dependent reduction by NADPH to yield (R)-2,3-dihydroxy-isovalerate. This Geobacillus sp. (strain WCH70) protein is Ketol-acid reductoisomerase (NADP(+)).